A 361-amino-acid polypeptide reads, in one-letter code: Ankyrin repeat domain-containing protein 16 (361 aa).

ANK repeat units follow at residues 36 to 66 (AGDTLLHCAARHGHRDVLAYLAEAWGMDIEA), 70 to 99 (DYKRPLHEAASMGHRDCVRYLLGRGAAVDC), 103 to 132 (ADWTPLMMACTRKNLGVIQELVEHGANPLL), 136 to 165 (DGWNSFHIASREGDPLILQYLLTVCPGAWK), 170 to 200 (IRRTPLHTAAMHGHLEAVKVLLKRCQYEPDY), 204 to 234 (CGVTALMDAIQCGHIDVARLLLDEHGACLSA), 238 to 268 (LGAQALHRAAVTGQDEAIRFLVSELGVDVDV), 273 to 302 (THLTALHYAAKEGHTSTIQTLLSLGADINS), and 306 to 335 (KNRSALHLACAGQHLACAKFLLQSGLKDSE).

Interacts with AARS; the interaction is direct.

Its subcellular location is the cytoplasm. It localises to the nucleus. In terms of biological role, required to prevent the misactivation of serine (Ser) with tRNA(Ala) by promoting the hydrolysis of Ser-mischarged tRNA(Ala), thereby playing a role in translational fidelity. Binds directly to the catalytic domain of AARS/AlaRS and captures Ser that is misactivated by AARS/AlaRS, preventing the charging of Ser adenylates to tRNA(Ala) and precluding Ser misincorporation in nascent peptides. The sequence is that of Ankyrin repeat domain-containing protein 16 from Homo sapiens (Human).